We begin with the raw amino-acid sequence, 82 residues long: U-actitoxin-Avd3m (82 aa).

Residues 1–16 form the signal peptide; that stretch reads MVFLLCFFLVADVSYG. The region spanning 21 to 71 is the BPTI/Kunitz inhibitor domain; the sequence is CELPKVVGPCRGGFRRYYYNSSSKRCEKFIYGGCRGNANNFHTLEECEKVC. Disulfide bonds link Cys-21/Cys-71, Cys-30/Cys-54, and Cys-46/Cys-67. Positions 76–82 are excised as a propeptide; it reads RDSPKEN.

The protein belongs to the venom Kunitz-type family. Sea anemone type 2 potassium channel toxin subfamily.

It localises to the secreted. Its subcellular location is the nematocyst. Its function is as follows. Serine protease inhibitor that inhibits both tissue and plasma kallikreins. Has hemolytic activity. Inhibits voltage-gated potassium channels (Kv). The chain is U-actitoxin-Avd3m from Anemonia viridis (Snakelocks anemone).